The primary structure comprises 163 residues: Nucleotide-binding protein CJE0423 (163 aa).

It belongs to the YajQ family.

In terms of biological role, nucleotide-binding protein. This Campylobacter jejuni (strain RM1221) protein is Nucleotide-binding protein CJE0423.